Reading from the N-terminus, the 234-residue chain is Protein XNDC1N (234 aa).

In Homo sapiens (Human), this protein is Protein XNDC1N.